A 1004-amino-acid chain; its full sequence is Copper-transporting ATPase (1004 aa).

The Cytoplasmic segment spans residues 1–262; the sequence is MREVILAVHG…FWKKNSIKST (262 aa). HMA domains lie at 2-67 and 80-146; these read REVI…FDCE and KEGL…FDSN. Residues Cys-13, Cys-16, Cys-91, and Cys-94 each contribute to the Cu(+) site. A helical transmembrane segment spans residues 263–283; it reads LLAIICMLLYMIVPMMWPTIV. The Lumenal, vesicle segment spans residues 284–303; that stretch reads QDRIFPYKETSFVRGLFYRD. The chain crosses the membrane as a helical span at residues 304–324; the sequence is ILGVILASYIQFSVGFYFYKA. The Cytoplasmic segment spans residues 325–335; sequence AWASLKHGSGT. The helical transmembrane segment at 336–356 threads the bilayer; the sequence is MDTLVCVSTTCAYTFSVFSLV. Over 357–370 the chain is Lumenal, vesicle; sequence HNMFHPSSTGKLPR. A helical membrane pass occupies residues 371–391; sequence IVFDTSIMIISYISIGKYLET. Topologically, residues 392 to 528 are cytoplasmic; that stretch reads LAKSQTSTAL…IQGYADYLAS (137 aa). Residues 529-549 form a helical membrane-spanning segment; it reads IFVPGILILAVLTFFIWCFIL. Residues 550-577 lie on the Lumenal, vesicle side of the membrane; it reads NISANPPVAFTANTKADNFFICLQTATS. The chain crosses the membrane as a helical span at residues 578-598; the sequence is VVIVACPCALGLATPTAIMVG. The Cytoplasmic portion of the chain corresponds to 599 to 901; it reads TGVGAQNGVL…LKTFKRIKLN (303 aa). Asp-627 serves as the catalytic 4-aspartylphosphate intermediate. 2 residues coordinate Mg(2+): Asp-838 and Asp-842. The chain crosses the membrane as a helical span at residues 902-924; that stretch reads LFWALCYNIFMIPIAMGVLIPWG. At 925–927 the chain is on the lumenal, vesicle side; sequence ITL. A helical membrane pass occupies residues 928 to 950; the sequence is PPMLAGLAMAFSSVSVVLSSLML. The Cytoplasmic segment spans residues 951–1004; that stretch reads KKWTPPDIESHGISDFKSKFSIGNFWSRLFSTRAIAGEQDIESQAGLMSNEEVL.

The protein belongs to the cation transport ATPase (P-type) (TC 3.A.3) family. Type IB subfamily. As to quaternary structure, interacts with the copper chaperone ATX1 via the copper anion.

The protein localises to the golgi apparatus. It is found in the trans-Golgi network membrane. The enzyme catalyses Cu(+)(in) + ATP + H2O = Cu(+)(out) + ADP + phosphate + H(+). Copper-transporting P-type ATPase necessary for the proper uptake of iron. Required for export of copper from cytosol into extracytosolic compartment. Retrieves copper from the metallochaperone ATX1 and incorporates it into trans-Golgi vesicles where they are acquired by the cell-surface iron transporter FET3. Required the production of inositolphosphorylceramide D, probably by delivering copper to a yet to be identified enzyme. This chain is Copper-transporting ATPase, found in Saccharomyces cerevisiae (strain ATCC 204508 / S288c) (Baker's yeast).